A 456-amino-acid polypeptide reads, in one-letter code: Bifunctional protein GlmU (456 aa).

Residues 1–227 (MKLRVVILAA…AQEVEGANNR (227 aa)) form a pyrophosphorylase region. Residues 8–11 (LAAG), Lys22, Gln73, 78–79 (GT), 100–102 (YGD), Gly137, Glu152, Asn167, and Asn225 contribute to the UDP-N-acetyl-alpha-D-glucosamine site. Asp102 serves as a coordination point for Mg(2+). Asn225 provides a ligand contact to Mg(2+). Positions 228–248 (QQLASLERALQQRQAEELMTQ) are linker. The segment at 249–456 (GVTLIDPARF…WQRPQSKKGT (208 aa)) is N-acetyltransferase. 2 residues coordinate UDP-N-acetyl-alpha-D-glucosamine: Arg331 and Lys349. The active-site Proton acceptor is the His361. Tyr364 and Asn375 together coordinate UDP-N-acetyl-alpha-D-glucosamine. Residues Ala378, 384–385 (NY), Ser403, Ala421, and Arg438 each bind acetyl-CoA.

In the N-terminal section; belongs to the N-acetylglucosamine-1-phosphate uridyltransferase family. This sequence in the C-terminal section; belongs to the transferase hexapeptide repeat family. As to quaternary structure, homotrimer. The cofactor is Mg(2+).

The protein localises to the cytoplasm. It carries out the reaction alpha-D-glucosamine 1-phosphate + acetyl-CoA = N-acetyl-alpha-D-glucosamine 1-phosphate + CoA + H(+). The catalysed reaction is N-acetyl-alpha-D-glucosamine 1-phosphate + UTP + H(+) = UDP-N-acetyl-alpha-D-glucosamine + diphosphate. It participates in nucleotide-sugar biosynthesis; UDP-N-acetyl-alpha-D-glucosamine biosynthesis; N-acetyl-alpha-D-glucosamine 1-phosphate from alpha-D-glucosamine 6-phosphate (route II): step 2/2. It functions in the pathway nucleotide-sugar biosynthesis; UDP-N-acetyl-alpha-D-glucosamine biosynthesis; UDP-N-acetyl-alpha-D-glucosamine from N-acetyl-alpha-D-glucosamine 1-phosphate: step 1/1. Its pathway is bacterial outer membrane biogenesis; LPS lipid A biosynthesis. Its function is as follows. Catalyzes the last two sequential reactions in the de novo biosynthetic pathway for UDP-N-acetylglucosamine (UDP-GlcNAc). The C-terminal domain catalyzes the transfer of acetyl group from acetyl coenzyme A to glucosamine-1-phosphate (GlcN-1-P) to produce N-acetylglucosamine-1-phosphate (GlcNAc-1-P), which is converted into UDP-GlcNAc by the transfer of uridine 5-monophosphate (from uridine 5-triphosphate), a reaction catalyzed by the N-terminal domain. This is Bifunctional protein GlmU from Idiomarina loihiensis (strain ATCC BAA-735 / DSM 15497 / L2-TR).